A 308-amino-acid chain; its full sequence is Phenylcoumaran benzylic ether reductase Betv6 (308 aa).

NADP(+) is bound by residues 11-17 (GGTGYIG), R36, and K45. K133 acts as the Proton acceptor in catalysis. An NADP(+)-binding site is contributed by R137.

This sequence belongs to the NmrA-type oxidoreductase family. Isoflavone reductase subfamily.

The catalysed reaction is (-)-dehydrodiconiferyl alcohol + NADPH + H(+) = (S)-isodihydrodehydrodiconiferyl alcohol + NADP(+). It catalyses the reaction (+)-dehydrodiconiferyl alcohol + NADPH + H(+) = (R)-isodihydrodehydrodiconiferyl alcohol + NADP(+). Functionally, oxidoreductase involved in lignan biosynthesis. Catalyzes the NADPH-dependent reduction of phenylcoumaran benzylic ethers. Converts dehydrodiconiferyl alcohol (DDC) to isodihydrodehydrodiconiferyl alcohol (IDDDC). This Betula pendula (European white birch) protein is Phenylcoumaran benzylic ether reductase Betv6.